We begin with the raw amino-acid sequence, 512 residues long: Reduced folate transporter (512 aa).

An N-acetylmethionine modification is found at Met1. The Cytoplasmic portion of the chain corresponds to 1–29 (MVPTGQVAEKQAYEEPRQDHELKSWRCLV). Residues 30-50 (FYLCFFGFMAQLRPGESFITP) traverse the membrane as a helical segment. Folate is bound by residues Ile48 and Thr49. Topologically, residues 51-62 (FLLERKFTKEQV) are extracellular. Residues 63 to 85 (TNEIIPMLPYSHLAVLVPVFLLT) form a helical membrane-spanning segment. The Cytoplasmic portion of the chain corresponds to 86–89 (DYLR). The helical transmembrane segment at 90 to 110 (YKPVLVLQCLSFVCVWLLLLL) threads the bilayer. Topologically, residues 111–114 (GTSV) are extracellular. A helical transmembrane segment spans residues 115-137 (VHMQLMEVFYSVTMAARIAYSSY). The folate site is built by Glu121 and Arg131. Residues 138 to 151 (IFSLVHPSRYQRMA) lie on the Cytoplasmic side of the membrane. A helical transmembrane segment spans residues 152-176 (SYSRAAVLLGVFISSVLGQALVTVG). Val162 serves as a coordination point for folate. Topologically, residues 177–181 (HISTY) are extracellular. Residues 182–200 (TLNCVSLGFILFSLVLSLF) form a helical membrane-spanning segment. Topologically, residues 201-266 (LKRPKRSLFF…ELVENARQPQ (66 aa)) are cytoplasmic. The chain crosses the membrane as a helical span at residues 267-292 (LRLWCLWWVFNSSGYYLITYYVHVLW). Folate-binding residues include Tyr281, Tyr282, and Tyr286. The Extracellular portion of the chain corresponds to 293–300 (RSTDSSLS). The chain crosses the membrane as a helical span at residues 301–323 (YNGAVDAASTLLSAITSFSAGFL). Residues 324–329 (SIRWTL) lie on the Cytoplasmic side of the membrane. A helical membrane pass occupies residues 330–350 (WSKLVIAGVIAIQASLVFCMF). Residues 351 to 353 (QIR) are Extracellular-facing. A helical membrane pass occupies residues 354–377 (DIWVCYVTFVLFRGAYQFLVPIAT). Arg366 and Gln370 together coordinate folate. At 378-391 (FQIASSLSKELCAL) the chain is on the cytoplasmic side. Residues 392–415 (VFGINTFLATALKTCITLVVSDKR) form a helical membrane-spanning segment. The segment at 400 to 412 (ATALKTCITLVVS) is required for substrate-binding. Topologically, residues 416-423 (GLGLQVRD) are extracellular. The chain crosses the membrane as a helical span at residues 424 to 448 (QFRIYFIYFLMLSITCFAWAGLDGL). Residues 449–512 (RYCQRGRHQP…RGDLRVEAKA (64 aa)) are Cytoplasmic-facing. 3 positions are modified to phosphoserine: Ser467, Ser472, and Ser477. A disordered region spans residues 478 to 512 (LQDGDLRGPQPSAPQLLSEDGMEDDRGDLRVEAKA).

It belongs to the reduced folate carrier (RFC) transporter (TC 2.A.48) family.

The protein localises to the cell membrane. It is found in the apical cell membrane. The protein resides in the basolateral cell membrane. It carries out the reaction 5-amino-1-(5-phospho-beta-D-ribosyl)imidazole-4-carboxamide(in) + (6S)-5-methyl-5,6,7,8-tetrahydrofolate(out) = 5-amino-1-(5-phospho-beta-D-ribosyl)imidazole-4-carboxamide(out) + (6S)-5-methyl-5,6,7,8-tetrahydrofolate(in). Functionally, antiporter that mediates the import of reduced folates, driven by the export of organic anions. Also acts as an importer of immunoreactive cyclic dinucleotides, but with a lower transporter activity. Mechanistically, acts as a secondary active transporter, which exports intracellular organic anions down their concentration gradients to facilitate the uptake of its substrates. Has high affinity for N5-methyltetrahydrofolate, the predominant circulating form of folate. Also mediates the import of antifolate drug methotrexate. 5-amino-4-imidazolecarboxamide riboside (AICAR), when phosphorylated to AICAR monophosphate, can serve as an organic anion for antiporter activity. The polypeptide is Reduced folate transporter (Mus musculus (Mouse)).